The chain runs to 518 residues: Bifunctional methyltransferase (518 aa).

The hemK stretch occupies residues 1 to 300; that stretch reads MQYSIKQILS…SHNRVIEISP (300 aa). Residues 1-302 form an RF MTase region; the sequence is MQYSIKQILS…NRVIEISPIN (302 aa). Residues 140–144, aspartate 163, tryptophan 192, asparagine 207, glutamate 347, glutamate 372, asparagine 399, and aspartate 421 contribute to the S-adenosyl-L-methionine site; that span reads GTGSG. A substrate-binding site is contributed by 207-210; it reads NPPY. The tRNA (guanine-N(7)-)-methyltransferase stretch occupies residues 301 to 518; that stretch reads INLNRSYARR…MILQHALTDH (218 aa). The segment at 305-518 is tRNA MTase; the sequence is RSYARRIGKS…MILQHALTDH (214 aa). The active site involves aspartate 421. The substrate site is built by lysine 425 and aspartate 457.

In the C-terminal section; belongs to the class I-like SAM-binding methyltransferase superfamily. TrmB family. It in the N-terminal section; belongs to the protein N5-glutamine methyltransferase family. PrmC subfamily.

The catalysed reaction is L-glutaminyl-[peptide chain release factor] + S-adenosyl-L-methionine = N(5)-methyl-L-glutaminyl-[peptide chain release factor] + S-adenosyl-L-homocysteine + H(+). It carries out the reaction guanosine(46) in tRNA + S-adenosyl-L-methionine = N(7)-methylguanosine(46) in tRNA + S-adenosyl-L-homocysteine. In terms of biological role, methylates the class 1 translation termination release factors RF1/PrfA and RF2/PrfB on the glutamine residue of the universally conserved GGQ motif. Its function is as follows. Catalyzes the formation of N(7)-methylguanine at position 46 (m7G46) in tRNA. In Rickettsia prowazekii (strain Madrid E), this protein is Bifunctional methyltransferase (prmC/trmB).